Here is a 104-residue protein sequence, read N- to C-terminus: Integration host factor subunit beta (104 aa).

It belongs to the bacterial histone-like protein family. As to quaternary structure, heterodimer of an alpha and a beta chain.

This protein is one of the two subunits of integration host factor, a specific DNA-binding protein that functions in genetic recombination as well as in transcriptional and translational control. This Xylella fastidiosa (strain 9a5c) protein is Integration host factor subunit beta (ihfB).